We begin with the raw amino-acid sequence, 326 residues long: Photosystem II assembly factor Ycf39 (326 aa).

Belongs to the NmrA-type oxidoreductase family. Ycf39 subfamily. In terms of assembly, purified in several chlorophyll- and carotenoid-containing complexes, including photosystem II (PSII) assembly intermediate complex RCII* (iD1, D1, D2, PsbE, PsbF, PsbI, Ycf39, Ycf48, HliC and HliD) and the Ycf39-Hlip complex (Ycf39, HliC, HliD and pigments). Tagged protein does not pull down mature PSII.

Its subcellular location is the cellular thylakoid membrane. Functionally, requires HliD to bind pigments. The Ycf39-Hlip complex binds D1 at an early stage of PSII assembly along with Ycf48, ribosomes and ChlG, the last enzyme in chlorophyll biosynthesis; it may be involved in chlorophyll reuse and delivery to D1 in the initial stages of PSII assembly. The Ycf39-Hlip complex efficiently quenches chlorophyll fluorescence, contributing to photoprotection. In Synechocystis sp. (strain ATCC 27184 / PCC 6803 / Kazusa), this protein is Photosystem II assembly factor Ycf39.